The following is a 1438-amino-acid chain: Lysophospholipase NTE1 (1438 aa).

Over 1–25 (MDSDTSSADFHSTETLVSTPKYSYG) the chain is Cytoplasmic. Residues 26-46 (VLINVILLVSWTCFRVVNWFL) traverse the membrane as a helical segment. Topologically, residues 47–64 (VTLPSILLGMLSKTFQIT) are lumenal. A helical membrane pass occupies residues 65-85 (LSLSSILMFVVAVTAICFLVV). The Cytoplasmic segment spans residues 86–1438 (RYKYLTRYSR…HVSLSRRNSI (1353 aa)). Residues 432–450 (YETQTIPNESEDSPTIQRS) show a composition bias toward polar residues. The interval 432-464 (YETQTIPNESEDSPTIQRSSLRRRASHSTSLRK) is disordered. A nucleoside 3',5'-cyclic phosphate is bound by residues 590–720 (GDDS…LTID) and 707–856 (RLKR…VANR). The PNPLA domain occupies 1131-1295 (LVLGGGGSRG…LDNLPVSEMK (165 aa)). Positions 1135-1140 (GGGSRG) match the GXGXXG motif. Positions 1162 to 1166 (GTSIG) match the GXSXG motif. The active-site Nucleophile is the serine 1164. Aspartate 1282 acts as the Proton acceptor in catalysis. A DGA/G motif is present at residues 1282-1284 (DGG).

This sequence belongs to the NTE family.

It is found in the endoplasmic reticulum membrane. The enzyme catalyses a 1-acyl-sn-glycero-3-phosphocholine + H2O = sn-glycerol 3-phosphocholine + a fatty acid + H(+). Inhibited by organophosphorus esters. Functionally, intracellular phospholipase B that catalyzes the double deacylation of phosphatidylcholine (PC) to glycerophosphocholine (GroPCho). Plays an important role in membrane lipid homeostasis. Responsible for the rapid PC turnover in response to inositol, elevated temperatures, or when choline is present in the growth medium. The protein is Lysophospholipase NTE1 (NTE1) of Meyerozyma guilliermondii (strain ATCC 6260 / CBS 566 / DSM 6381 / JCM 1539 / NBRC 10279 / NRRL Y-324) (Yeast).